Consider the following 124-residue polypeptide: Large ribosomal subunit protein bL12 (124 aa).

Basic and acidic residues predominate over residues 102–116; sequence MSKEDAEAAKTKLEE. The tract at residues 102-124 is disordered; the sequence is MSKEDAEAAKTKLEEAGASVELK.

This sequence belongs to the bacterial ribosomal protein bL12 family. As to quaternary structure, homodimer. Part of the ribosomal stalk of the 50S ribosomal subunit. Forms a multimeric L10(L12)X complex, where L10 forms an elongated spine to which 2 to 4 L12 dimers bind in a sequential fashion. Binds GTP-bound translation factors.

In terms of biological role, forms part of the ribosomal stalk which helps the ribosome interact with GTP-bound translation factors. Is thus essential for accurate translation. This Chromohalobacter salexigens (strain ATCC BAA-138 / DSM 3043 / CIP 106854 / NCIMB 13768 / 1H11) protein is Large ribosomal subunit protein bL12.